Consider the following 962-residue polypeptide: Spliceosome associated factor 3, U4/U6 recycling protein (962 aa).

Residues 1–21 (MATTAASSASEPEVEPQAGPE) are compositionally biased toward low complexity. Residues 1-92 (MATTAASSAS…EDEWEYDEEE (92 aa)) are disordered. The residue at position 2 (Ala2) is an N-acetylalanine. The mediates interaction with PRPF3 stretch occupies residues 2 to 352 (ATTAASSASE…LVPDLWIRYS (351 aa)). Position 10 is a phosphoserine (Ser10). Over residues 81–92 (AGEDEWEYDEEE) the composition is skewed to acidic residues. HAT repeat units lie at residues 127-159 (GELS…DEIS), 165-196 (LDRE…YSVG), 202-238 (GGLE…FESA), 243-276 (ARLE…WSEE), 325-357 (GDPA…YLDR), 360-392 (KVKD…AMER), 395-431 (LDHQ…YLRR), 441-474 (KELE…PSCL), and 488-521 (NNMQ…LERA). Residue Ser216 is modified to Phosphoserine. Positions 488–521 (NNMQKARELWDSIMTRGNAKYANMWLEYYNLERA) are required for interaction with USP4. Residues 538-952 (CTSDYPEHVC…VATEAPKMSN (415 aa)) are necessary and sufficient for U6 snRNA binding. The stretch at 559–618 (TLEDWDLAIQKTETRLARVNEQRMKAAEKEAALVQQEEEKAEQRKKVRAEKKALKKKKKT) forms a coiled coil. A compositionally biased stretch (basic and acidic residues) spans 591–602 (LVQQEEEKAEQR). Residues 591-696 (LVQQEEEKAE…SLKRDMPKVA (106 aa)) form a disordered region. The tract at residues 601-670 (QRKKVRAEKK…KEETELSGKC (70 aa)) is required for nuclear localization. The Nuclear localization signal motif lies at 602 to 609 (RKKVRAEK). Residues 603–618 (KKVRAEKKALKKKKKT) show a composition bias toward basic residues. Positions 627-640 (DEDEENEWGEEEEE) are enriched in acidic residues. Phosphoserine is present on Ser651. Residues 680–696 (KQKEKAASLKRDMPKVA) show a composition bias toward basic and acidic residues. One can recognise an RRM 1 domain in the interval 704 to 782 (VTVFVSNLPY…RPMFVSPCVD (79 aa)). A phosphoserine mark is found at Ser795 and Ser852. The region spanning 801 to 878 (HKLFISGLPF…NVIKVAISNP (78 aa)) is the RRM 2 domain. The interval 880-962 (QRKVPEKPEV…ADFAKLLLRK (83 aa)) is disordered. Arg906 carries the post-translational modification Omega-N-methylarginine.

Component of the 7SK snRNP complex at least composed of P-TEFb (composed of CDK9 and CCNT1/cyclin-T1), HEXIM1, HEXIM2, BCDIN3, SART3 proteins and 7SK and U6 snRNAs. Interacts with AGO1 and AGO2. Interacts with PRPF3 and USP4; the interaction with PRPF3 is direct and recruits USP4 to its substrate PRPF3. Interacts with USP15; the interaction is direct. As to expression, ubiquitously expressed, with low level of expression in liver, heart and skeletal. Also detected in hematopoietic cells (at protein level).

It localises to the nucleus. It is found in the nucleoplasm. The protein resides in the cajal body. Its subcellular location is the nucleus speckle. The protein localises to the cytoplasm. Its function is as follows. U6 snRNP-binding protein that functions as a recycling factor of the splicing machinery. Promotes the initial reassembly of U4 and U6 snRNPs following their ejection from the spliceosome during its maturation. Also binds U6atac snRNPs and may function as a recycling factor for U4atac/U6atac spliceosomal snRNP, an initial step in the assembly of U12-type spliceosomal complex. The U12-type spliceosomal complex plays a role in the splicing of introns with non-canonical splice sites. May also function as a substrate-targeting factor for deubiquitinases like USP4 and USP15. Recruits USP4 to ubiquitinated PRPF3 within the U4/U5/U6 tri-snRNP complex, promoting PRPF3 deubiquitination and thereby regulating the spliceosome U4/U5/U6 tri-snRNP spliceosomal complex disassembly. May also recruit the deubiquitinase USP15 to histone H2B and mediate histone deubiquitination, thereby regulating gene expression and/or DNA repair. May play a role in hematopoiesis probably through transcription regulation of specific genes including MYC. The chain is Spliceosome associated factor 3, U4/U6 recycling protein from Mus musculus (Mouse).